We begin with the raw amino-acid sequence, 191 residues long: RRP15-like protein (191 aa).

Basic and acidic residues predominate over residues 1-11 (MSTKNRDRLVV). The disordered stretch occupies residues 1-52 (MSTKNRDRLVVTEDSDDDNEREEMSSGGESGEEGPSSVDGGAGDADETVAFP). Positions 53-84 (AIERRKKKVIKKLTKKEQSLKKSVKEYRIKLA) form a coiled coil. The span at 119–153 (QKTMSDAVKEKMTARERREARQRFDGKNFDSDRFA) shows a compositional bias: basic and acidic residues. A disordered region spans residues 119–191 (QKTMSDAVKE…IDTGNYSDED (73 aa)). Over residues 166-191 (GEDDDGEDQMDIGEEQIDTGNYSDED) the composition is skewed to acidic residues.

It belongs to the RRP15 family.

The sequence is that of RRP15-like protein from Caenorhabditis elegans.